The following is a 120-amino-acid chain: UPF0102 protein PST_1070 (120 aa).

This sequence belongs to the UPF0102 family.

In Stutzerimonas stutzeri (strain A1501) (Pseudomonas stutzeri), this protein is UPF0102 protein PST_1070.